A 392-amino-acid chain; its full sequence is MTDRQTDTAPSPSAHLLAGGLPTVDAAASREEPKPAPGGGVEGVGARGIARKLFVQLLGSSRSVVAVVCAAGDKPIGAGRSASSGLEKPGPEKRGEEEKEEERGPQWALGSQEPSSWTGEAAVCADSAPAARAPQAPARASVPEGRGARQGAQESGLPRSPSRRGSASRAGPGRASETMNFLLSWVHWTLALLLYLHHAKWSQAAPTTEGEQKSHEVIKFMDVYQRSYCRPIETLVDIFQEYPDEIEYIFKPSCVPLMRCAGCCNDEALECVPTSESNITMQIMRIKPHQSQHIGEMSFLQHSRCECRPKKDRTKPEKKSVRGKGKGQKRKRKKSRFKSWSVHCEPCSERRKHLFVQDPQTCKCSCKNTDSRCKARQLELNERTCRCDKPRR.

2 disordered regions span residues 1 to 44 and 73 to 174; these read MTDR…VEGV and DKPI…GPGR. Residues 89–104 are compositionally biased toward basic and acidic residues; that stretch reads PGPEKRGEEEKEEERG. Low complexity-rich tracts occupy residues 121 to 143 and 158 to 174; these read AAVC…ASVP and PRSP…GPGR. Disulfide bonds link cysteine 229/cysteine 271, cysteine 260/cysteine 305, and cysteine 264/cysteine 307. Asparagine 278 is a glycosylation site (N-linked (GlcNAc...) asparagine). Over residues 309 to 320 the composition is skewed to basic and acidic residues; sequence PKKDRTKPEKKS. Residues 309–337 form a disordered region; that stretch reads PKKDRTKPEKKSVRGKGKGQKRKRKKSRF. Positions 321 to 337 are enriched in basic residues; sequence VRGKGKGQKRKRKKSRF.

This sequence belongs to the PDGF/VEGF growth factor family. As to quaternary structure, homodimer; disulfide-linked. Also found as heterodimer with PGF. Interacts with NRP1. Interacts with isoform 2 of BSG. Interacts with CD82; this interaction inhibits VEGFA-mediated signaling pathway. Produced by use of an alternative upstream CUG codon and post-translationally processed into the N-terminal N-VEGF form and the C-terminal secreted VEGFA form. As to expression, in developing embryos, expressed mainly in the choroid plexus, paraventricular neuroepithelium, placenta and kidney glomeruli. Also found in bronchial epithelium, adrenal gland and in seminiferous tubules of testis. High expression continues in kidney glomeruli and choroid plexus in adults.

It is found in the cytoplasm. It localises to the nucleus. Its subcellular location is the secreted. The protein resides in the endoplasmic reticulum. The protein localises to the golgi apparatus. It is found in the extracellular space. It localises to the extracellular matrix. Its subcellular location is the cell membrane. In terms of biological role, participates in the induction of key genes involved in the response to hypoxia and in the induction of angiogenesis such as HIF1A. Involved in protecting cells from hypoxia-mediated cell death. Growth factor active in angiogenesis, vasculogenesis and endothelial cell growth. Induces endothelial cell proliferation, promotes cell migration, inhibits apoptosis and induces permeabilization of blood vessels. Binds to the FLT1/VEGFR1 and KDR/VEGFR2 receptors, heparan sulfate and heparin. Binds to the NRP1/neuropilin-1 receptor. Binding to NRP1 receptor initiates a signaling pathway needed for motor neuron axon guidance and cell body migration, including for the caudal migration of facial motor neurons from rhombomere 4 to rhombomere 6 during embryonic development. Also binds the DEAR/FBXW7-AS1 receptor. May play a role in increasing vascular permeability during lactation, when increased transport of molecules from the blood is required for efficient milk protein synthesis. The polypeptide is Vascular endothelial growth factor A, long form (Vegfa) (Mus musculus (Mouse)).